A 240-amino-acid chain; its full sequence is Probable transcriptional regulatory protein Hac_0344 (240 aa).

It belongs to the TACO1 family.

The protein resides in the cytoplasm. In Helicobacter acinonychis (strain Sheeba), this protein is Probable transcriptional regulatory protein Hac_0344.